The following is a 147-amino-acid chain: UPF0047 protein sll1880 (147 aa).

Belongs to the UPF0047 family.

In Synechocystis sp. (strain ATCC 27184 / PCC 6803 / Kazusa), this protein is UPF0047 protein sll1880.